The following is a 393-amino-acid chain: Pyrimidine monooxygenase RutA (393 aa).

Residues 79–80, N145, E154, 170–171, and S220 each bind FMN; these read IK and RY.

This sequence belongs to the NtaA/SnaA/DszA monooxygenase family. RutA subfamily.

The enzyme catalyses uracil + FMNH2 + NADH + O2 = (Z)-3-ureidoacrylate + FMN + NAD(+) + H2O + H(+). It carries out the reaction thymine + FMNH2 + NADH + O2 = (Z)-2-methylureidoacrylate + FMN + NAD(+) + H2O + H(+). Functionally, catalyzes the pyrimidine ring opening between N-3 and C-4 by an unusual flavin hydroperoxide-catalyzed mechanism, adding oxygen atoms in the process to yield ureidoacrylate peracid, that immediately reacts with FMN forming ureidoacrylate and FMN-N(5)-oxide. The FMN-N(5)-oxide reacts spontaneously with NADH to produce FMN. Requires the flavin reductase RutF to regenerate FMN in vivo. The protein is Pyrimidine monooxygenase RutA of Escherichia coli O18:K1:H7 (strain IHE3034 / ExPEC).